A 358-amino-acid polypeptide reads, in one-letter code: MQVFNFSAGPAMMPKVVLEQAQQELLNWLDQGTSVMEVSHRGKYFMEMITQAEKDFRQLYNIPENYKVLFLQGGARGQFAAIPMNLANKKGKTLYLTSGHWSATAAKEARLFTEVDEINILLDGKLEVGELDFSHIASQYDYVHYCPNETISGVEIVDVPNVGEAVLVADMSSNILSREIDISKFGVIYAGAQKNLGPAGITVVIVREDLIGHARKETPSIWNYEIQSKNSSMINTPPTFAWYLCSLVFKYLLAQGGIKEMAKLNREKAKLLYDFLDQSDFYHNVVAPKNRSLMNVTFTTNNDELNAKFVAEATACGLQALKGHKVLGGMRASIYNAMPIEGIKALIEFMRKFEAENN.

R41 provides a ligand contact to L-glutamate. Residues 75 to 76, W101, T150, D170, and Q193 contribute to the pyridoxal 5'-phosphate site; that span reads AR. K194 bears the N6-(pyridoxal phosphate)lysine mark. A pyridoxal 5'-phosphate-binding site is contributed by 235–236; sequence NT.

The protein belongs to the class-V pyridoxal-phosphate-dependent aminotransferase family. SerC subfamily. Homodimer. Pyridoxal 5'-phosphate serves as cofactor.

It localises to the cytoplasm. The catalysed reaction is O-phospho-L-serine + 2-oxoglutarate = 3-phosphooxypyruvate + L-glutamate. The enzyme catalyses 4-(phosphooxy)-L-threonine + 2-oxoglutarate = (R)-3-hydroxy-2-oxo-4-phosphooxybutanoate + L-glutamate. It participates in amino-acid biosynthesis; L-serine biosynthesis; L-serine from 3-phospho-D-glycerate: step 2/3. The protein operates within cofactor biosynthesis; pyridoxine 5'-phosphate biosynthesis; pyridoxine 5'-phosphate from D-erythrose 4-phosphate: step 3/5. Catalyzes the reversible conversion of 3-phosphohydroxypyruvate to phosphoserine and of 3-hydroxy-2-oxo-4-phosphonooxybutanoate to phosphohydroxythreonine. This chain is Phosphoserine aminotransferase, found in Histophilus somni (strain 129Pt) (Haemophilus somnus).